The sequence spans 540 residues: Chaperonin GroEL (540 aa).

ATP is bound by residues Thr29 to Pro32, Asp86 to Thr90, Gly413, and Asp495.

Belongs to the chaperonin (HSP60) family. As to quaternary structure, forms a cylinder of 14 subunits composed of two heptameric rings stacked back-to-back. Interacts with the co-chaperonin GroES.

The protein resides in the cytoplasm. The catalysed reaction is ATP + H2O + a folded polypeptide = ADP + phosphate + an unfolded polypeptide.. Its function is as follows. Together with its co-chaperonin GroES, plays an essential role in assisting protein folding. The GroEL-GroES system forms a nano-cage that allows encapsulation of the non-native substrate proteins and provides a physical environment optimized to promote and accelerate protein folding. The sequence is that of Chaperonin GroEL from Caldanaerobacter subterraneus subsp. tengcongensis (strain DSM 15242 / JCM 11007 / NBRC 100824 / MB4) (Thermoanaerobacter tengcongensis).